Here is a 218-residue protein sequence, read N- to C-terminus: Probable GTP-binding protein EngB (218 aa).

An EngB-type G domain is found at 21–192; sequence NAPQIALAGR…WQELHRLAFP (172 aa). Residues 29–36, 56–60, 75–78, 142–145, and 171–173 contribute to the GTP site; these read GRSNVGKS, GKTRS, DLPG, TKAD, and FSS. Mg(2+) is bound by residues Ser-36 and Thr-58. Positions 194–218 are disordered; it reads MAFDTPSDGAPEPADEPEAASERAE.

This sequence belongs to the TRAFAC class TrmE-Era-EngA-EngB-Septin-like GTPase superfamily. EngB GTPase family. Mg(2+) is required as a cofactor.

Functionally, necessary for normal cell division and for the maintenance of normal septation. The chain is Probable GTP-binding protein EngB from Oleidesulfovibrio alaskensis (strain ATCC BAA-1058 / DSM 17464 / G20) (Desulfovibrio alaskensis).